The sequence spans 402 residues: Zinc finger protein 809 (402 aa).

One can recognise a KRAB domain in the interval 4-75; that stretch reads VSFEDVAVDF…AEASSRSLPG (72 aa). Residues 118-139 are disordered; sequence QEVSKGTTSRHRRAPVKSLCRK. Residues 125–139 show a composition bias toward basic residues; it reads TSRHRRAPVKSLCRK. 7 consecutive C2H2-type zinc fingers follow at residues 155-178, 184-206, 213-235, 241-263, 269-291, 297-319, and 325-347; these read YECKDCEKVFCNNSTLIKHYRRTH, YECDECSKMYYWKSDLTSHQKTH, YECSECGKAFFRKSHLNAHERTH, YECTECRKAFYYKSDLTRHKKTH, FKCEECKKAFSRKSKLAIHQKKH, YECTECKKAFSHQSQLTAHRIAH, and YECKECNKSFHWKCQLTAHQKRH.

Belongs to the krueppel C2H2-type zinc-finger protein family.

It localises to the nucleus. Transcription factor specifically required to repress retrotransposons in embryonic stem cells. Recognizes and binds retroviral DNA sequences from a large subset of mammalian retroviruses and retroelements and repress their expression by recruiting a repressive complex containing TRIM28/KAP1. The polypeptide is Zinc finger protein 809 (Mus musculus (Mouse)).